A 459-amino-acid chain; its full sequence is E3 ubiquitin-protein ligase RNF25 (459 aa).

In terms of domain architecture, RWD spans 18–128 (SEVEVLESIY…EKGKEILTDN (111 aa)). Residues Cys135, Cys138, Cys153, His155, His158, Cys161, Cys198, and Cys201 each contribute to the Zn(2+) site. The RING-type zinc-finger motif lies at 135–202 (CVICLYGFQE…AVGVQCPVCR (68 aa)). Disordered regions lie at residues 268 to 309 (PPAP…PPLP) and 322 to 459 (TRSN…KDGS). The span at 282–303 (KGSQPPSTLAAELSTSPAVQST) shows a compositional bias: polar residues. Basic and acidic residues-rich tracts occupy residues 349 to 370 (QPERRHPKGGECHAPKGTRDTQ), 378 to 389 (PLKEPMDLKPEP), 413 to 424 (RTRDCVRWERSK), and 446 to 459 (TRRESLGLESKDGS). Ser450 carries the phosphoserine modification.

It belongs to the RNF25 family. Interacts with UBE2D2, and may also interact with UBE2E1 and UBE2E3. Interacts with RELA/p65. Ubiquitinated; autoubiquitinated.

The protein localises to the cytoplasm. The catalysed reaction is S-ubiquitinyl-[E2 ubiquitin-conjugating enzyme]-L-cysteine + [acceptor protein]-L-lysine = [E2 ubiquitin-conjugating enzyme]-L-cysteine + N(6)-ubiquitinyl-[acceptor protein]-L-lysine.. It functions in the pathway protein modification; protein ubiquitination. E3 ubiquitin-protein ligase that plays a key role in the RNF14-RNF25 translation quality control pathway, a pathway that takes place when a ribosome has stalled during translation, and which promotes ubiquitination and degradation of translation factors on stalled ribosomes. Catalyzes ubiquitination of RPS27A in response to ribosome collisions, promoting activation of RNF14. RNF25 catalyzes ubiquitination of other ribosomal proteins on stalled ribosomes, such as RPL0, RPL1, RPL12, RPS13 and RPS17. Also involved in ubiquitination and degradation of stalled ETF1/eRF1. Independently of its function in the response to stalled ribosomes, mediates ubiquitination and subsequent proteasomal degradation of NKD2. May also stimulate transcription mediated by NF-kappa-B via its interaction with RELA/p65. The chain is E3 ubiquitin-protein ligase RNF25 from Homo sapiens (Human).